The following is a 175-amino-acid chain: ATP synthase subunit b, chloroplastic (175 aa).

Residues 21–40 form a helical membrane-spanning segment; that stretch reads LLESNVINIIILISLLIYLG.

The protein belongs to the ATPase B chain family. In terms of assembly, F-type ATPases have 2 components, F(1) - the catalytic core - and F(0) - the membrane proton channel. F(1) has five subunits: alpha(3), beta(3), gamma(1), delta(1), epsilon(1). F(0) has four main subunits: a(1), b(1), b'(1) and c(10-14). The alpha and beta chains form an alternating ring which encloses part of the gamma chain. F(1) is attached to F(0) by a central stalk formed by the gamma and epsilon chains, while a peripheral stalk is formed by the delta, b and b' chains.

The protein localises to the plastid. Its subcellular location is the chloroplast thylakoid membrane. Functionally, f(1)F(0) ATP synthase produces ATP from ADP in the presence of a proton or sodium gradient. F-type ATPases consist of two structural domains, F(1) containing the extramembraneous catalytic core and F(0) containing the membrane proton channel, linked together by a central stalk and a peripheral stalk. During catalysis, ATP synthesis in the catalytic domain of F(1) is coupled via a rotary mechanism of the central stalk subunits to proton translocation. In terms of biological role, component of the F(0) channel, it forms part of the peripheral stalk, linking F(1) to F(0). The sequence is that of ATP synthase subunit b, chloroplastic from Cyanidium caldarium (Red alga).